Here is a 90-residue protein sequence, read N- to C-terminus: Sec-independent protein translocase protein TatA (90 aa).

The chain crosses the membrane as a helical span at residues 1–21 (MGISPWTLLIVLLIVLLVFGT). Basic and acidic residues-rich tracts occupy residues 42 to 59 (MKEGEEGAKEGEKSEPSK) and 70 to 90 (SGEGHTIEGERSEQPRDRHSS). Residues 42-90 (MKEGEEGAKEGEKSEPSKLEQPPEEEKESGEGHTIEGERSEQPRDRHSS) form a disordered region.

It belongs to the TatA/E family. As to quaternary structure, the Tat system comprises two distinct complexes: a TatABC complex, containing multiple copies of TatA, TatB and TatC subunits, and a separate TatA complex, containing only TatA subunits. Substrates initially bind to the TatABC complex, which probably triggers association of the separate TatA complex to form the active translocon.

The protein resides in the cell inner membrane. In terms of biological role, part of the twin-arginine translocation (Tat) system that transports large folded proteins containing a characteristic twin-arginine motif in their signal peptide across membranes. TatA could form the protein-conducting channel of the Tat system. The protein is Sec-independent protein translocase protein TatA of Alkalilimnicola ehrlichii (strain ATCC BAA-1101 / DSM 17681 / MLHE-1).